An 854-amino-acid chain; its full sequence is N-terminal acetyltransferase A complex subunit NAT1 (854 aa).

An N-acetylserine modification is found at Ser2. TPR repeat units follow at residues 20–53 (ENDQFLEALKLYEGKQYKKSLKLLDAILKKDGSH), 54–87 (VDSLALKGLDLYSVGEKDDAASYVANAIRKIEGA), 91–124 (PICCHVLGIYMRNTKEYKESIKWFTAALNNGSTN), 126–162 (QIYRDLATLQSQIGDFKNALVSRKKYWEAFLGYRANW), 241–274 (FGLLERKATIYMKLGQLKDASIVYRTLIKRNPDN), 384–417 (IWTNYYLSQHFLFLKDFPKAQEYIDAALDHTPTL), and 452–485 (RFINCKTVKYFLRANNIDKAVEVASLFTKNDDSV). Residues 623 to 667 (LKRKSDSLDENSDEIQNNGQNSSSQKKKAKKEAAAMNKRKETEAK) adopt a coiled-coil conformation. A disordered region spans residues 626–668 (KSDSLDENSDEIQNNGQNSSSQKKKAKKEAAAMNKRKETEAKS). Phosphoserine is present on Ser674. The stretch at 728-761 (ALCFASLNKFAKRFGTTSGLFGSMAIVLLHATRN) is one TPR 8 repeat.

Component of the N-terminal acetyltransferase A (NatA) complex, which is composed of ARD1, NAT1 and NAT5. Can self-associate. NAT1 associates with the nascent polypeptide chain and the ribosome. The N-terminus is blocked.

Its subcellular location is the cytoplasm. Its function is as follows. Non-catalytic component of the NatA N-terminal acetyltransferase, which catalyzes acetylation of proteins beginning with Met-Ser, Met-Gly and Met-Ala. N-acetylation plays a role in normal eukaryotic translation and processing, protect against proteolytic degradation and protein turnover. NAT1 anchors ARD1 and NAT5 to the ribosome and may present the N termini of nascent polypeptides for acetylation. The sequence is that of N-terminal acetyltransferase A complex subunit NAT1 (NAT1) from Saccharomyces cerevisiae (strain ATCC 204508 / S288c) (Baker's yeast).